A 128-amino-acid polypeptide reads, in one-letter code: Small ribosomal subunit protein uS8c (128 aa).

Belongs to the universal ribosomal protein uS8 family. As to quaternary structure, part of the 30S ribosomal subunit.

It is found in the plastid. It localises to the chloroplast. In terms of biological role, one of the primary rRNA binding proteins, it binds directly to 16S rRNA central domain where it helps coordinate assembly of the platform of the 30S subunit. The protein is Small ribosomal subunit protein uS8c (rps8) of Welwitschia mirabilis (Tree tumbo).